Here is a 682-residue protein sequence, read N- to C-terminus: Kinesin-like protein KIF2A (682 aa).

The globular stretch occupies residues 1 to 192 (MVTSLNEDSE…LDYRPLTTSD (192 aa)). The segment at 39–129 (LAPDEEIDPG…GKKDFGLASR (91 aa)) is disordered. Over residues 99–115 (IEQSASRQQNGSVSDIS) the composition is skewed to polar residues. Residues 198–528 (RICVCVRKRP…LRYANRVKEL (331 aa)) enclose the Kinesin motor domain. An ATP-binding site is contributed by 288 to 295 (GQTGSGKT). A coiled-coil region spans residues 638 to 673 (QLEAILEKKIDILTELRDKVKSFRAALQEEEHASKQ).

It belongs to the TRAFAC class myosin-kinesin ATPase superfamily. Kinesin family. MCAK/KIF2 subfamily. In terms of assembly, interacts with aurka and plk1. Post-translationally, phosphorylation by plk1 promotes location at spindle microtubules and spindle poles, and enhances its microtubule depolymerization activity. In terms of processing, phosphorylation by AURKA interferes with location at spindle microtubules and spindle poles, and inhibits its microtubule depolymerization activity.

Its subcellular location is the cytoplasm. The protein resides in the cytoskeleton. It localises to the microtubule organizing center. It is found in the centrosome. The protein localises to the spindle pole. Its subcellular location is the spindle. In terms of biological role, plus end-directed microtubule-dependent motor. May regulate microtubule dynamics during axonal growth. Required for normal progression through mitosis. Required for normal congress of chromosomes at the metaphase plate. Required for normal spindle dynamics during mitosis. Promotes spindle turnover. Implicated in formation of bipolar mitotic spindles Has microtubule depolymerization activity. This is Kinesin-like protein KIF2A (kif2a) from Xenopus laevis (African clawed frog).